Reading from the N-terminus, the 264-residue chain is Regulatory protein RecX (264 aa).

The protein belongs to the RecX family.

It localises to the cytoplasm. Modulates RecA activity. In Limosilactobacillus reuteri (strain DSM 20016) (Lactobacillus reuteri), this protein is Regulatory protein RecX.